The chain runs to 481 residues: CUGBP Elav-like family member 6 (481 aa).

Over residues 1-12 (MAAAPGGSAQPA) the composition is skewed to low complexity. The disordered stretch occupies residues 1–34 (MAAAPGGSAQPAGPGPRLGFSTADSGVGMSGLNP). RRM domains are found at residues 46-127 (IKLF…PAAS), 134-214 (RKLF…LADT), and 396-474 (CNLF…LKRP).

Belongs to the CELF/BRUNOL family. Expressed mainly in kidney, brain and testis and present in other tissues albeit at lower levels. Also expressed in fetal kidney.

It is found in the nucleus. It localises to the cytoplasm. In terms of biological role, RNA-binding protein implicated in the regulation of pre-mRNA alternative splicing. Mediates exon inclusion and/or exclusion in pre-mRNA that are subject to tissue-specific and developmentally regulated alternative splicing. Specifically activates exon 5 inclusion of TNNT2 in a muscle-specific splicing enhancer (MSE)-dependent manner. Promotes also exon exclusion of INSR pre-mRNA. This chain is CUGBP Elav-like family member 6 (CELF6), found in Homo sapiens (Human).